Consider the following 433-residue polypeptide: Histidine--tRNA ligase (433 aa).

Belongs to the class-II aminoacyl-tRNA synthetase family. Homodimer.

The protein resides in the cytoplasm. It catalyses the reaction tRNA(His) + L-histidine + ATP = L-histidyl-tRNA(His) + AMP + diphosphate + H(+). In Crocosphaera subtropica (strain ATCC 51142 / BH68) (Cyanothece sp. (strain ATCC 51142)), this protein is Histidine--tRNA ligase.